The sequence spans 313 residues: 7,8-didemethyl-8-hydroxy-5-deazariboflavin synthase (313 aa).

Residues 4–235 (ITYSPAYTLV…AEITLQIPPN (232 aa)) enclose the Radical SAM core domain. Residues Cys18, Cys22, and Cys25 each coordinate [4Fe-4S] cluster.

The protein belongs to the radical SAM superfamily. CofG family. Consists of two subunits, CofG and CofH. It depends on [4Fe-4S] cluster as a cofactor.

The enzyme catalyses 5-amino-5-(4-hydroxybenzyl)-6-(D-ribitylimino)-5,6-dihydrouracil + S-adenosyl-L-methionine = 7,8-didemethyl-8-hydroxy-5-deazariboflavin + 5'-deoxyadenosine + L-methionine + NH4(+) + H(+). The protein operates within cofactor biosynthesis; coenzyme F0 biosynthesis. Catalyzes the radical-mediated synthesis of 7,8-didemethyl-8-hydroxy-5-deazariboflavin from 5-amino-5-(4-hydroxybenzyl)-6-(D-ribitylimino)-5,6-dihydrouracil. The chain is 7,8-didemethyl-8-hydroxy-5-deazariboflavin synthase from Synechocystis sp. (strain ATCC 27184 / PCC 6803 / Kazusa).